Reading from the N-terminus, the 170-residue chain is Peptide deformylase 2 (170 aa).

Residues Cys94 and His136 each contribute to the Fe cation site. Glu137 is a catalytic residue. His140 is a binding site for Fe cation.

The protein belongs to the polypeptide deformylase family. The cofactor is Fe(2+).

It carries out the reaction N-terminal N-formyl-L-methionyl-[peptide] + H2O = N-terminal L-methionyl-[peptide] + formate. Its function is as follows. Removes the formyl group from the N-terminal Met of newly synthesized proteins. Requires at least a dipeptide for an efficient rate of reaction. N-terminal L-methionine is a prerequisite for activity but the enzyme has broad specificity at other positions. The chain is Peptide deformylase 2 from Xanthomonas campestris pv. campestris (strain ATCC 33913 / DSM 3586 / NCPPB 528 / LMG 568 / P 25).